A 329-amino-acid polypeptide reads, in one-letter code: Cathepsin K (329 aa).

A signal peptide spans 1–15 (MWVFKFLLLPMVSFA). Positions 16 to 114 (LSPEEMLDTQ…TLYTPEWEGR (99 aa)) are cleaved as a propeptide — activation peptide. N-linked (GlcNAc...) asparagine glycosylation occurs at asparagine 103. 2 disulfides stabilise this stretch: cysteine 136–cysteine 177 and cysteine 170–cysteine 210. Cysteine 139 is a catalytic residue. A glycan (N-linked (GlcNAc...) asparagine) is linked at asparagine 213. Cysteines 269 and 318 form a disulfide. Residues histidine 276 and asparagine 296 contribute to the active site.

Belongs to the peptidase C1 family. Predominantly expressed in bones. Expressed in thyroid epithelial cells.

Its subcellular location is the lysosome. The protein resides in the secreted. It is found in the apical cell membrane. The catalysed reaction is Broad proteolytic activity. With small-molecule substrates and inhibitors, the major determinant of specificity is P2, which is preferably Leu, Met &gt; Phe, and not Arg.. Its function is as follows. Thiol protease involved in osteoclastic bone resorption. Displays potent endoprotease activity against fibrinogen at acid pH. May play an important role in extracellular matrix degradation. Involved in the release of thyroid hormone thyroxine (T4) by limited proteolysis of TG/thyroglobulin in the thyroid follicle lumen. The polypeptide is Cathepsin K (Ctsk) (Mus musculus (Mouse)).